Consider the following 73-residue polypeptide: Translation initiation factor IF-1 (73 aa).

The 73-residue stretch at 1–73 folds into the S1-like domain; it reads MAKKDGAIEV…TRGRIVYRYK (73 aa).

It belongs to the IF-1 family. As to quaternary structure, component of the 30S ribosomal translation pre-initiation complex which assembles on the 30S ribosome in the order IF-2 and IF-3, IF-1 and N-formylmethionyl-tRNA(fMet); mRNA recruitment can occur at any time during PIC assembly.

The protein localises to the cytoplasm. In terms of biological role, one of the essential components for the initiation of protein synthesis. Stabilizes the binding of IF-2 and IF-3 on the 30S subunit to which N-formylmethionyl-tRNA(fMet) subsequently binds. Helps modulate mRNA selection, yielding the 30S pre-initiation complex (PIC). Upon addition of the 50S ribosomal subunit IF-1, IF-2 and IF-3 are released leaving the mature 70S translation initiation complex. The protein is Translation initiation factor IF-1 of Mycolicibacterium gilvum (strain PYR-GCK) (Mycobacterium gilvum (strain PYR-GCK)).